A 545-amino-acid polypeptide reads, in one-letter code: Ribosomal protein uS12 methylthiotransferase RimO (545 aa).

The MTTase N-terminal domain maps to 7–129 (RRVALVTLGC…IGEHLDAVLG (123 aa)). Positions 16, 52, 92, 197, 201, and 204 each coordinate [4Fe-4S] cluster. The 232-residue stretch at 183 to 414 (LTAGPVAALK…DLVEQLTATR (232 aa)) folds into the Radical SAM core domain. In terms of domain architecture, TRAM spans 416 to 510 (QERIGSRVQV…GVDLVAEFTA (95 aa)). 2 disordered regions span residues 454-486 (LPGP…QPGV) and 516-545 (RPSA…ADGT). The segment covering 455-464 (PGPAGAAAGP) has biased composition (low complexity).

It belongs to the methylthiotransferase family. RimO subfamily. The cofactor is [4Fe-4S] cluster.

The protein localises to the cytoplasm. The enzyme catalyses L-aspartate(89)-[ribosomal protein uS12]-hydrogen + (sulfur carrier)-SH + AH2 + 2 S-adenosyl-L-methionine = 3-methylsulfanyl-L-aspartate(89)-[ribosomal protein uS12]-hydrogen + (sulfur carrier)-H + 5'-deoxyadenosine + L-methionine + A + S-adenosyl-L-homocysteine + 2 H(+). Functionally, catalyzes the methylthiolation of an aspartic acid residue of ribosomal protein uS12. This Frankia alni (strain DSM 45986 / CECT 9034 / ACN14a) protein is Ribosomal protein uS12 methylthiotransferase RimO.